The sequence spans 392 residues: S-adenosylmethionine synthase (392 aa).

His-20 lines the ATP pocket. Asp-22 is a binding site for Mg(2+). A K(+)-binding site is contributed by Glu-48. 2 residues coordinate L-methionine: Glu-61 and Gln-106. The flexible loop stretch occupies residues 106 to 116 (QSRDIINAIEK). Residues 171 to 173 (DSK), Asp-248, 254 to 255 (RK), Ala-271, and Lys-275 each bind ATP. Residue Asp-248 coordinates L-methionine. Residue Lys-279 coordinates L-methionine.

Belongs to the AdoMet synthase family. In terms of assembly, homotetramer; dimer of dimers. Mg(2+) is required as a cofactor. Requires K(+) as cofactor.

The protein resides in the cytoplasm. The enzyme catalyses L-methionine + ATP + H2O = S-adenosyl-L-methionine + phosphate + diphosphate. It participates in amino-acid biosynthesis; S-adenosyl-L-methionine biosynthesis; S-adenosyl-L-methionine from L-methionine: step 1/1. Its function is as follows. Catalyzes the formation of S-adenosylmethionine (AdoMet) from methionine and ATP. The overall synthetic reaction is composed of two sequential steps, AdoMet formation and the subsequent tripolyphosphate hydrolysis which occurs prior to release of AdoMet from the enzyme. This is S-adenosylmethionine synthase from Borreliella afzelii (strain PKo) (Borrelia afzelii).